Here is a 480-residue protein sequence, read N- to C-terminus: MTHHLAPLDSLPTSIYPPSAYPPPSFFESSSLIYPALLIPAKRTGEVQKTLKDVIFTEPKRKSVYPLEEGVDYSSIEVSAEGGYDPMKERKVVLIRLGDIAGKNEEEQITGIKEDPVFQDARVKSMLLSAKINIGAEPSTAPNAATNVEEVPSSFEIAGHVAHVNLRSESLPYKYLIGKAILDKNPKLRVVVNKIGNIENEFRTFPMEILAGEGLDLDLLKEHGCRFKLDFAKVYWNSRLQGEHARLVQYITKPKECIVADAMAGVGPFAVPLTSALAPHYYKTTVVCHANDLNPISYKYLQTNAQLNRCFADRLITYNLDGREFIHKMNYERIEADHFIMNLPQMAPEFLDAFRGWKFDDTTGHRPIIHVHCFDEKTRNEEETARMETHVLQRCEAALGSSGCLVDKRQENDVQIRVVRDVGPRKNMLCVSFRLPVEVAGVEKLLLTKNSDAEVNGKRKRENYDCVAEVSNVSKKERDS.

S-adenosyl-L-methionine is bound by residues His244, 292–293 (DL), 321–322 (DG), and Asn342.

This sequence belongs to the class I-like SAM-binding methyltransferase superfamily. TRM5/TYW2 family. In terms of assembly, monomer.

The protein localises to the mitochondrion matrix. It localises to the nucleus. The protein resides in the cytoplasm. The catalysed reaction is guanosine(37) in tRNA + S-adenosyl-L-methionine = N(1)-methylguanosine(37) in tRNA + S-adenosyl-L-homocysteine + H(+). Functionally, specifically methylates the N1 position of guanosine-37 in various cytoplasmic and mitochondrial tRNAs. Methylation is not dependent on the nature of the nucleoside 5' of the target nucleoside. This is the first step in the biosynthesis of wybutosine (yW), a modified base adjacent to the anticodon of tRNAs and required for accurate decoding. This Thalassiosira pseudonana (Marine diatom) protein is tRNA (guanine(37)-N(1))-methyltransferase.